The sequence spans 209 residues: Eukaryotic translation initiation factor 4E (209 aa).

Residues 51-52 (WH), 97-98 (WE), and 153-158 (RKQAYR) contribute to the mRNA site.

This sequence belongs to the eukaryotic initiation factor 4E family. In terms of assembly, eIF4F is a multi-subunit complex, the composition of which varies with external and internal environmental conditions. It is composed of at least eIF4A, eIF4E and eIF4G. eIF4E is also known to interact with other partners.

In terms of biological role, recognizes and binds the 7-methylguanosine-containing mRNA cap during an early step in the initiation of protein synthesis and facilitates ribosome binding by inducing the unwinding of the mRNAs secondary structures. The chain is Eukaryotic translation initiation factor 4E (TIF45) from Candida albicans (strain SC5314 / ATCC MYA-2876) (Yeast).